A 425-amino-acid polypeptide reads, in one-letter code: Serine--tRNA ligase (425 aa).

L-serine is bound at residue 233–235 (TAE). 264-266 (RRE) is an ATP binding site. Glu287 contacts L-serine. 351–354 (EISS) contributes to the ATP binding site. An L-serine-binding site is contributed by Ser387.

This sequence belongs to the class-II aminoacyl-tRNA synthetase family. Type-1 seryl-tRNA synthetase subfamily. As to quaternary structure, homodimer. The tRNA molecule binds across the dimer.

The protein resides in the cytoplasm. The catalysed reaction is tRNA(Ser) + L-serine + ATP = L-seryl-tRNA(Ser) + AMP + diphosphate + H(+). The enzyme catalyses tRNA(Sec) + L-serine + ATP = L-seryl-tRNA(Sec) + AMP + diphosphate + H(+). It participates in aminoacyl-tRNA biosynthesis; selenocysteinyl-tRNA(Sec) biosynthesis; L-seryl-tRNA(Sec) from L-serine and tRNA(Sec): step 1/1. Functionally, catalyzes the attachment of serine to tRNA(Ser). Is also able to aminoacylate tRNA(Sec) with serine, to form the misacylated tRNA L-seryl-tRNA(Sec), which will be further converted into selenocysteinyl-tRNA(Sec). This is Serine--tRNA ligase from Thermotoga maritima (strain ATCC 43589 / DSM 3109 / JCM 10099 / NBRC 100826 / MSB8).